A 159-amino-acid chain; its full sequence is MTGSILRRAPLLGVAGLVVLVDQATKLLAASQLADGRIVQLLPGLINGQLVHNTGAAFSLFRGSVQWLGLLSLAVTTGLLIWVVRHRTPPFWQGMAVAFLLGGTLGNGIDRWRLGHVIDFLALVPINFPIFNPADIAINLAVLCFLVDLWSSRTSSRHG.

Transmembrane regions (helical) follow at residues 64 to 84 and 89 to 109; these read SVQW…IWVV and PPFW…GNGI. Residues Asp119 and Asp135 contribute to the active site. Residues 130–150 traverse the membrane as a helical segment; that stretch reads IFNPADIAINLAVLCFLVDLW.

The protein belongs to the peptidase A8 family.

It localises to the cell inner membrane. It carries out the reaction Release of signal peptides from bacterial membrane prolipoproteins. Hydrolyzes -Xaa-Yaa-Zaa-|-(S,diacylglyceryl)Cys-, in which Xaa is hydrophobic (preferably Leu), and Yaa (Ala or Ser) and Zaa (Gly or Ala) have small, neutral side chains.. Its pathway is protein modification; lipoprotein biosynthesis (signal peptide cleavage). In terms of biological role, this protein specifically catalyzes the removal of signal peptides from prolipoproteins. The sequence is that of Lipoprotein signal peptidase from Parasynechococcus marenigrum (strain WH8102).